The primary structure comprises 1137 residues: Receptor-type guanylate cyclase gcy-1 (1137 aa).

Positions 1–18 (MQIFTILLLFNIFPSIFV) are cleaved as a signal peptide. Residues 19–494 (QNLPDTTVAP…CPVSFWEQYK (476 aa)) lie on the Extracellular side of the membrane. N-linked (GlcNAc...) asparagine glycans are attached at residues Asn219, Asn348, Asn358, Asn384, Asn417, and Asn451. A helical transmembrane segment spans residues 495–515 (ILIFVAIAVIVLMVLIMIIGC). The Cytoplasmic segment spans residues 516-1137 (LCVISGKRAE…FKMDTLKVAN (622 aa)). In terms of domain architecture, Protein kinase spans 557 to 826 (LQSAPSISTG…ENICSQMKGL (270 aa)). Positions 840 to 871 (NMLEEYTSTLEEEIEERTKELTLEKKKADILL) form a coiled coil. The region spanning 898 to 1028 (TVFFSDVVKF…DTVNTASRME (131 aa)) is the Guanylate cyclase domain. A disordered region spans residues 1086–1122 (ELRSISNRSTPPVTNDRWIPNPSSSHGSRPSSVYDPL). Polar residues predominate over residues 1088-1098 (RSISNRSTPPV). Over residues 1105–1117 (PNPSSSHGSRPSS) the composition is skewed to low complexity.

This sequence belongs to the adenylyl cyclase class-4/guanylyl cyclase family. Expressed predominantly in sensory neurons. Expressed asymmetrically in the right ASE (ASER) neuron and bilaterally in ASI and URX neurons. Expressed in PVT and bilaterally in AIY non-sensory neurons. Expressed in intestine.

It is found in the membrane. It carries out the reaction GTP = 3',5'-cyclic GMP + diphosphate. Functionally, guanylate cyclase involved in the production of the second messenger cGMP. Involved in the sensing of K+ gradient by the ASE right (ASER) sensory neuron. The sequence is that of Receptor-type guanylate cyclase gcy-1 (gcy-1) from Caenorhabditis elegans.